The chain runs to 599 residues: Elongation factor 4 (599 aa).

In terms of domain architecture, tr-type G spans 5–187; the sequence is NRIRNFSIVA…AIVTRLPAPK (183 aa). GTP contacts are provided by residues 17–22 and 134–137; these read DHGKST and NKVD.

It belongs to the TRAFAC class translation factor GTPase superfamily. Classic translation factor GTPase family. LepA subfamily.

Its subcellular location is the cell inner membrane. It catalyses the reaction GTP + H2O = GDP + phosphate + H(+). Functionally, required for accurate and efficient protein synthesis under certain stress conditions. May act as a fidelity factor of the translation reaction, by catalyzing a one-codon backward translocation of tRNAs on improperly translocated ribosomes. Back-translocation proceeds from a post-translocation (POST) complex to a pre-translocation (PRE) complex, thus giving elongation factor G a second chance to translocate the tRNAs correctly. Binds to ribosomes in a GTP-dependent manner. The sequence is that of Elongation factor 4 from Jannaschia sp. (strain CCS1).